Consider the following 82-residue polypeptide: Large ribosomal subunit protein eL14 (82 aa).

The protein belongs to the eukaryotic ribosomal protein eL14 family.

In Pyrococcus abyssi (strain GE5 / Orsay), this protein is Large ribosomal subunit protein eL14.